Here is a 596-residue protein sequence, read N- to C-terminus: Aspartate--tRNA(Asp/Asn) ligase (596 aa).

Glutamate 175 lines the L-aspartate pocket. The tract at residues 199–202 is aspartate; it reads QQYK. L-aspartate contacts are provided by arginine 221 and histidine 454. Residue 221 to 223 coordinates ATP; it reads RDE. ATP is bound at residue glutamate 488. Arginine 495 provides a ligand contact to L-aspartate. Residue 540 to 543 participates in ATP binding; the sequence is GIDR.

Belongs to the class-II aminoacyl-tRNA synthetase family. Type 1 subfamily. As to quaternary structure, homodimer.

The protein localises to the cytoplasm. The catalysed reaction is tRNA(Asx) + L-aspartate + ATP = L-aspartyl-tRNA(Asx) + AMP + diphosphate. In terms of biological role, aspartyl-tRNA synthetase with relaxed tRNA specificity since it is able to aspartylate not only its cognate tRNA(Asp) but also tRNA(Asn). Reaction proceeds in two steps: L-aspartate is first activated by ATP to form Asp-AMP and then transferred to the acceptor end of tRNA(Asp/Asn). The polypeptide is Aspartate--tRNA(Asp/Asn) ligase (Rhizobium leguminosarum bv. trifolii (strain WSM2304)).